We begin with the raw amino-acid sequence, 584 residues long: ATP-dependent lipid A-core flippase (584 aa).

5 consecutive transmembrane segments (helical) span residues 15-35 (LLGYLLGYWKVLLLSMLSMAV), 63-83 (IMWVPLAIIGIYLIRGLAGFI), 153-173 (LGMLGLMLTTDWQLTLICLVV), 251-271 (TGVTQLMIACALAAILYFAGL), and 277-297 (GLTAGDFMVFLTAMLGLFAPV). Residues 27-309 (LLSMLSMAVA…ISSVSQAMQR (283 aa)) form the ABC transmembrane type-1 domain. The ABC transporter domain maps to 341–576 (LSFDAVSFAY…GGLYARLHSL (236 aa)). Residue 375-382 (GSSGSGKT) coordinates ATP.

Belongs to the ABC transporter superfamily. Lipid exporter (TC 3.A.1.106) family. In terms of assembly, homodimer.

Its subcellular location is the cell inner membrane. The enzyme catalyses ATP + H2O + lipid A-core oligosaccharideSide 1 = ADP + phosphate + lipid A-core oligosaccharideSide 2.. Its function is as follows. Involved in lipopolysaccharide (LPS) biosynthesis. Translocates lipid A-core from the inner to the outer leaflet of the inner membrane. Transmembrane domains (TMD) form a pore in the inner membrane and the ATP-binding domain (NBD) is responsible for energy generation. The chain is ATP-dependent lipid A-core flippase from Chromobacterium violaceum (strain ATCC 12472 / DSM 30191 / JCM 1249 / CCUG 213 / NBRC 12614 / NCIMB 9131 / NCTC 9757 / MK).